Reading from the N-terminus, the 310-residue chain is Inner membrane protein YfdC (310 aa).

Basic and acidic residues predominate over residues 1 to 12 (MDNDKIDQHSDE). A disordered region spans residues 1–27 (MDNDKIDQHSDEIEVESEEKERGKKIE). Residues 1 to 58 (MDNDKIDQHSDEIEVESEEKERGKKIEIDEDRLPSRAMAIHEHIRQDGEKELERDAMA) are Cytoplasmic-facing. Residues 59–81 (LLWSAIAAGLSMGASLLAKGIFQ) traverse the membrane as a helical segment. At 82-90 (VELEGVPGS) the chain is on the periplasmic side. The chain crosses the membrane as a helical span at residues 91-113 (FLLENLGYTFGFIIVIMARQQLF). Topologically, residues 114 to 133 (TENTVTAVLPVMQKPTMSNV) are cytoplasmic. Residues 134–156 (GLLIRLWGVVLLGNILGTGIAAW) traverse the membrane as a helical segment. The Periplasmic segment spans residues 157-186 (AFEYMPIFNEETRDAFVKIGMDVMKNTPSE). A helical transmembrane segment spans residues 187–206 (MFANAIISGWLIATMVWMFP). Residues 207–212 (AAGAAK) lie on the Cytoplasmic side of the membrane. A helical transmembrane segment spans residues 213 to 232 (IVVIILMTWLIALGDTTHIV). The Periplasmic portion of the chain corresponds to 233–251 (VGSVEILYLVFNGTLHWSD). A helical membrane pass occupies residues 252–274 (FIWPFALPTLAGNICGGTFIFAL). Over 275–310 (MSHAQIRNDMSNKRKAEARQKAERAENIKKNYKNPA) the chain is Cytoplasmic. The segment covering 291–303 (EARQKAERAENIK) has biased composition (basic and acidic residues). Residues 291-310 (EARQKAERAENIKKNYKNPA) are disordered.

The protein localises to the cell inner membrane. This Escherichia coli (strain K12) protein is Inner membrane protein YfdC (yfdC).